Here is a 252-residue protein sequence, read N- to C-terminus: Carbohydrate deacetylase (252 aa).

2 residues coordinate Mg(2+): histidine 59 and histidine 122.

This sequence belongs to the YdjC deacetylase family. Homodimer. Mg(2+) serves as cofactor.

Functionally, probably catalyzes the deacetylation of acetylated carbohydrates an important step in the degradation of oligosaccharides. This is Carbohydrate deacetylase from Vibrio cholerae serotype O1 (strain ATCC 39541 / Classical Ogawa 395 / O395).